A 329-amino-acid chain; its full sequence is GTP 3',8-cyclase (329 aa).

Residues 8–234 enclose the Radical SAM core domain; the sequence is AFARKFYYLR…QLRQRSDGPA (227 aa). Arg17 provides a ligand contact to GTP. Residues Cys24 and Cys28 each contribute to the [4Fe-4S] cluster site. Position 30 (Tyr30) interacts with S-adenosyl-L-methionine. Cys31 is a [4Fe-4S] cluster binding site. Arg68 is a binding site for GTP. Residue Gly72 coordinates S-adenosyl-L-methionine. A GTP-binding site is contributed by Thr99. Ser123 is an S-adenosyl-L-methionine binding site. Lys160 lines the GTP pocket. Met194 lines the S-adenosyl-L-methionine pocket. [4Fe-4S] cluster-binding residues include Cys257 and Cys260. 262-264 provides a ligand contact to GTP; the sequence is RLR. Cys274 contributes to the [4Fe-4S] cluster binding site.

The protein belongs to the radical SAM superfamily. MoaA family. In terms of assembly, monomer and homodimer. [4Fe-4S] cluster is required as a cofactor.

It catalyses the reaction GTP + AH2 + S-adenosyl-L-methionine = (8S)-3',8-cyclo-7,8-dihydroguanosine 5'-triphosphate + 5'-deoxyadenosine + L-methionine + A + H(+). It functions in the pathway cofactor biosynthesis; molybdopterin biosynthesis. Catalyzes the cyclization of GTP to (8S)-3',8-cyclo-7,8-dihydroguanosine 5'-triphosphate. The polypeptide is GTP 3',8-cyclase (Escherichia coli (strain K12 / MC4100 / BW2952)).